The following is a 560-amino-acid chain: MDIKRTILIAALAIVSYVMVLKWNDDYGQAALPTQNTAASTVAPGLPDGVPAANNGASADVPSANAESSPAELAPVALSKDLIRVKTDVLELAIDPVGGDIVQLNLPKYPRRQDHPDIPFQLFDNGGERVYLAQSGLTGANGPDARSTGRPLYAAEQKSFQLADGQEQLVVDLKFSDNGVNYIKRFSFKRGEYDLSVSYLIDNQSGQAWSGNMFAQLKRDASGDPSSSTATGTATYLGAALWTAGEPYKKVSMKDIDKGSLKENVSGGWVAWLQHYFVTAWIPAKSDNNVVQTRKDSQGNYIIGYTGPAISVPAGGKAETSAMLYAGPKIQSKLKELSPGLELTVDYGFLWFIAQPIFWLLQHIHSLLGNWGWSIIVLTMLIKGLFFPLSAASYRSMARMRAVAPKLAALKERFGDDRQKMSQAMMELYKKEKINPLGGCLPILVQMPVFLALYWVLLESVEMRQAPWMLWITDLSIKDPFFILPIIMGATMFIQQRLNPTPPDPMQAKVMKMMPIIFTFFFLWFPAGLVLYWVVNNCLSISQQWYITRRIEAATKKAAA.

Residues 1–21 (MDIKRTILIAALAIVSYVMVL) form a helical membrane-spanning segment. A disordered region spans residues 42-66 (VAPGLPDGVPAANNGASADVPSANA). 5 helical membrane passes run 341 to 361 (LELT…FWLL), 367 to 387 (LLGN…GLFF), 437 to 457 (LGGC…YWVL), 468 to 488 (WMLW…PIIM), and 515 to 535 (PIIF…YWVV).

The protein belongs to the OXA1/ALB3/YidC family. Type 1 subfamily. As to quaternary structure, interacts with the Sec translocase complex via SecD. Specifically interacts with transmembrane segments of nascent integral membrane proteins during membrane integration.

Its subcellular location is the cell inner membrane. In terms of biological role, required for the insertion and/or proper folding and/or complex formation of integral membrane proteins into the membrane. Involved in integration of membrane proteins that insert both dependently and independently of the Sec translocase complex, as well as at least some lipoproteins. Aids folding of multispanning membrane proteins. This chain is Membrane protein insertase YidC, found in Pseudomonas putida (strain W619).